The sequence spans 317 residues: Aspartate carbamoyltransferase catalytic subunit (317 aa).

Positions 65 and 66 each coordinate carbamoyl phosphate. Residue K93 coordinates L-aspartate. Residues R115, H145, and Q148 each coordinate carbamoyl phosphate. R178 and R233 together coordinate L-aspartate. 2 residues coordinate carbamoyl phosphate: G274 and P275.

Belongs to the aspartate/ornithine carbamoyltransferase superfamily. ATCase family. Heterododecamer (2C3:3R2) of six catalytic PyrB chains organized as two trimers (C3), and six regulatory PyrI chains organized as three dimers (R2).

It catalyses the reaction carbamoyl phosphate + L-aspartate = N-carbamoyl-L-aspartate + phosphate + H(+). The protein operates within pyrimidine metabolism; UMP biosynthesis via de novo pathway; (S)-dihydroorotate from bicarbonate: step 2/3. Functionally, catalyzes the condensation of carbamoyl phosphate and aspartate to form carbamoyl aspartate and inorganic phosphate, the committed step in the de novo pyrimidine nucleotide biosynthesis pathway. The polypeptide is Aspartate carbamoyltransferase catalytic subunit (Bordetella parapertussis (strain 12822 / ATCC BAA-587 / NCTC 13253)).